Here is a 309-residue protein sequence, read N- to C-terminus: Homoserine O-succinyltransferase (309 aa).

The active-site Acyl-thioester intermediate is the Cys-142. Positions 163 and 192 each coordinate substrate. Catalysis depends on His-235, which acts as the Proton acceptor. Glu-237 is a catalytic residue. Substrate is bound at residue Arg-249.

This sequence belongs to the MetA family.

It is found in the cytoplasm. It carries out the reaction L-homoserine + succinyl-CoA = O-succinyl-L-homoserine + CoA. The protein operates within amino-acid biosynthesis; L-methionine biosynthesis via de novo pathway; O-succinyl-L-homoserine from L-homoserine: step 1/1. Transfers a succinyl group from succinyl-CoA to L-homoserine, forming succinyl-L-homoserine. The sequence is that of Homoserine O-succinyltransferase from Klebsiella pneumoniae (strain 342).